A 341-amino-acid polypeptide reads, in one-letter code: MKKENKSVIIWLLSGCVLLFLMVVVGGITRLTNSGLSMTDWHLVTDTFPPLTDAKWQAAFDEYKKFPEYQKINIHNDFQLSDYKFIYFWEWFHRFIGRIIGLVFFVPFVYFLAKKKLDTSTIKKCIVLLAMGAFQGFLGWFMVRSGLIDNPDVSHFRLSLHLTFAFITFAYTLWVALDLIYPERNINKILPLRNIARYALAALLIQIIYGGFVAGLNAGLIHNHWPLMSDGEFIHESVFIEQSSLIKNLIEGKSGVQFVHRTFAYAVVAVILFLFFKSKKYTLTRTQSNGINTLVVFVFIQFLLGVFTLLYSVPLALGLIHQIMAFFLLSAMTYTLHRLSK.

8 helical membrane-spanning segments follow: residues V8 to I28, F92 to L112, I126 to G146, L160 to I180, A201 to I221, V256 to F276, L294 to P314, and L315 to T335. H260 is a heme binding site. H321 contributes to the heme binding site.

This sequence belongs to the COX15/CtaA family. Type 2 subfamily. As to quaternary structure, interacts with CtaB. Heme b serves as cofactor.

It is found in the cell membrane. It catalyses the reaction Fe(II)-heme o + 2 A + H2O = Fe(II)-heme a + 2 AH2. Its pathway is porphyrin-containing compound metabolism; heme A biosynthesis; heme A from heme O: step 1/1. In terms of biological role, catalyzes the conversion of heme O to heme A by two successive hydroxylations of the methyl group at C8. The first hydroxylation forms heme I, the second hydroxylation results in an unstable dihydroxymethyl group, which spontaneously dehydrates, resulting in the formyl group of heme A. This Flavobacterium johnsoniae (strain ATCC 17061 / DSM 2064 / JCM 8514 / BCRC 14874 / CCUG 350202 / NBRC 14942 / NCIMB 11054 / UW101) (Cytophaga johnsonae) protein is Heme A synthase.